The chain runs to 141 residues: Nucleoside diphosphate kinase (141 aa).

ATP contacts are provided by Lys11, Phe59, Arg87, Thr93, Arg104, and Asn114. The active-site Pros-phosphohistidine intermediate is the His117.

The protein belongs to the NDK family. As to quaternary structure, homotetramer. Mg(2+) serves as cofactor.

Its subcellular location is the cytoplasm. The catalysed reaction is a 2'-deoxyribonucleoside 5'-diphosphate + ATP = a 2'-deoxyribonucleoside 5'-triphosphate + ADP. It carries out the reaction a ribonucleoside 5'-diphosphate + ATP = a ribonucleoside 5'-triphosphate + ADP. Major role in the synthesis of nucleoside triphosphates other than ATP. The ATP gamma phosphate is transferred to the NDP beta phosphate via a ping-pong mechanism, using a phosphorylated active-site intermediate. In Xylella fastidiosa (strain M23), this protein is Nucleoside diphosphate kinase.